Here is a 139-residue protein sequence, read N- to C-terminus: D-ribose pyranase (139 aa).

The Proton donor role is filled by H20. Residues D28, H106, and 128-130 (YAN) each bind substrate.

It belongs to the RbsD / FucU family. RbsD subfamily. In terms of assembly, homodecamer.

It localises to the cytoplasm. It carries out the reaction beta-D-ribopyranose = beta-D-ribofuranose. Its pathway is carbohydrate metabolism; D-ribose degradation; D-ribose 5-phosphate from beta-D-ribopyranose: step 1/2. Functionally, catalyzes the interconversion of beta-pyran and beta-furan forms of D-ribose. In Pectobacterium atrosepticum (strain SCRI 1043 / ATCC BAA-672) (Erwinia carotovora subsp. atroseptica), this protein is D-ribose pyranase.